The following is a 421-amino-acid chain: Anthranilate synthase component 1 (421 aa).

Residues Ser31 and 207–209 (PYM) contribute to the L-tryptophan site. 242-243 (GT) contributes to the chorismate binding site. Glu269 contacts Mg(2+). Chorismate is bound by residues Tyr357, Arg377, 391–393 (GAG), and Gly393. Glu406 contributes to the Mg(2+) binding site.

It belongs to the anthranilate synthase component I family. As to quaternary structure, heterotetramer consisting of two non-identical subunits: a beta subunit (TrpG) and a large alpha subunit (TrpE). Requires Mg(2+) as cofactor.

It catalyses the reaction chorismate + L-glutamine = anthranilate + pyruvate + L-glutamate + H(+). It functions in the pathway amino-acid biosynthesis; L-tryptophan biosynthesis; L-tryptophan from chorismate: step 1/5. With respect to regulation, cooperatively feedback inhibited by tryptophan. Functionally, part of a heterotetrameric complex that catalyzes the two-step biosynthesis of anthranilate, an intermediate in the biosynthesis of L-tryptophan. In the first step, the glutamine-binding beta subunit (TrpG) of anthranilate synthase (AS) provides the glutamine amidotransferase activity which generates ammonia as a substrate that, along with chorismate, is used in the second step, catalyzed by the large alpha subunit of AS (TrpE) to produce anthranilate. In the absence of TrpG, TrpE can synthesize anthranilate directly from chorismate and high concentrations of ammonia. This Saccharolobus solfataricus (strain ATCC 35092 / DSM 1617 / JCM 11322 / P2) (Sulfolobus solfataricus) protein is Anthranilate synthase component 1 (trpE).